We begin with the raw amino-acid sequence, 331 residues long: Ferredoxin--NADP reductase (331 aa).

FAD contacts are provided by threonine 20, glutamate 39, glutamine 47, tyrosine 52, valine 92, phenylalanine 126, aspartate 287, and serine 328.

The protein belongs to the ferredoxin--NADP reductase type 2 family. In terms of assembly, homodimer. It depends on FAD as a cofactor.

It catalyses the reaction 2 reduced [2Fe-2S]-[ferredoxin] + NADP(+) + H(+) = 2 oxidized [2Fe-2S]-[ferredoxin] + NADPH. In Bacillus cereus (strain ZK / E33L), this protein is Ferredoxin--NADP reductase.